Reading from the N-terminus, the 436-residue chain is MDTTVMIEEHPQIKELIAKRPIVWQNPDYGKRADLPLTRADIFDAVARWERFAPFLAVAFPETAAMNGIIESPLLPLEQMKPAWEALNHQSLAGQLYLKADSQLPISGSIKSRGGIYEVLKFAEQVAMAHTDLTYMDDYSVLATAKYHELFAQYGVIVASTGNLALSVGIMAATFGFKTTVYMSHDARQWKKDKLRANGVTVEELNTDFSSVIPVARAAAAKDDHTHFVDDEGSRDLFLGYAVAGVRLQHQLKVQGIKMDAAHPVVVYLPAGVGGSPSGVAFGLKMIMGANIYPVFCEPTHVPSVTLGMMTKLNEKIAVQDIGLDGLTAADGLAVSRPSRLAGKVMRTLLLGTATFEDDDLYRYLTKLVDTEDVIVEPSAAAGFTAIAPIMAQFPTLAGKDVTHIVWATGGDMMPESERQLDYELGQKLLTKINNR.

K111 is subject to N6-(pyridoxal phosphate)lysine.

The protein belongs to the serine/threonine dehydratase family. DsdA subfamily. Pyridoxal 5'-phosphate serves as cofactor.

The catalysed reaction is D-serine = pyruvate + NH4(+). The polypeptide is Probable D-serine dehydratase (Lactiplantibacillus plantarum (strain ATCC BAA-793 / NCIMB 8826 / WCFS1) (Lactobacillus plantarum)).